A 30-amino-acid chain; its full sequence is L-amino-acid oxidase (30 aa).

This sequence belongs to the flavin monoamine oxidase family. FIG1 subfamily. Monomer. This is in contrast with most of its orthologs, that are non-covalently linked homodimers. FAD is required as a cofactor. In terms of processing, N-glycosylated. In terms of tissue distribution, expressed by the venom gland.

It localises to the secreted. It catalyses the reaction an L-alpha-amino acid + O2 + H2O = a 2-oxocarboxylate + H2O2 + NH4(+). It carries out the reaction L-leucine + O2 + H2O = 4-methyl-2-oxopentanoate + H2O2 + NH4(+). The enzyme catalyses L-phenylalanine + O2 + H2O = 3-phenylpyruvate + H2O2 + NH4(+). The catalysed reaction is L-tryptophan + O2 + H2O = indole-3-pyruvate + H2O2 + NH4(+). It catalyses the reaction L-methionine + O2 + H2O = 4-methylsulfanyl-2-oxobutanoate + H2O2 + NH4(+). It carries out the reaction L-2-aminohexanoate + O2 + H2O = 2-oxohexanoate + H2O2 + NH4(+). The enzyme catalyses L-tyrosine + O2 + H2O = 3-(4-hydroxyphenyl)pyruvate + H2O2 + NH4(+). In terms of biological role, catalyzes an oxidative deamination of predominantly hydrophobic and aromatic L-amino acids, thus producing hydrogen peroxide that may contribute to the diverse toxic effects of this enzyme. Is highly active against L-Met, L-Leu, L-norleucine (L-2-aminohexanoate), L-Trp, L-Phe, moderately active against L-Tyr, and no active on L-Gly, L-Ala, L-Val, L-Pro, L-His, L-Lys, L-Arg, L-Asp, L-Asn, L-Gln, L-Glu, L-Ser, and L-Thr. Exhibits diverse biological activities, such as hemorrhage, hemolysis, edema, antibacterial and antiparasitic activities. In addition, this protein induces apoptosis. It also interacts with endothelial cells, and inhibits collagen- and ADP-induced platelet aggregation. L-LAAO family effects on platelets are controversial, since it either induces aggregation or inhibits agonist-induced aggregation. These different effects are probably due to different experimental conditions. The chain is L-amino-acid oxidase from Bothrops leucurus (Whitetail lancehead).